The chain runs to 365 residues: Undecaprenyl-phosphate alpha-N-acetylglucosaminyl 1-phosphate transferase (365 aa).

10 helical membrane passes run 3–23 (LLTM…FLFV), 45–65 (GLIP…AFLI), 99–119 (IRAF…GLYL), 132–152 (VLGP…INAF), 157–177 (GIDG…GILL), 187–207 (LWCF…LGLL), 213–233 (VFMG…ILLQ), 242–262 (INPV…IAIM), 293–313 (QAFV…VIGE), and 315–335 (LTFI…LLYG).

This sequence belongs to the glycosyltransferase 4 family. WecA subfamily. Mg(2+) serves as cofactor. The cofactor is Mn(2+).

The protein localises to the cell inner membrane. It catalyses the reaction di-trans,octa-cis-undecaprenyl phosphate + UDP-N-acetyl-alpha-D-glucosamine = N-acetyl-alpha-D-glucosaminyl-di-trans,octa-cis-undecaprenyl diphosphate + UMP. It participates in bacterial outer membrane biogenesis; LPS O-antigen biosynthesis. The protein operates within bacterial outer membrane biogenesis; enterobacterial common antigen biosynthesis. Functionally, catalyzes the transfer of the GlcNAc-1-phosphate moiety from UDP-GlcNAc onto the carrier lipid undecaprenyl phosphate (C55-P), yielding GlcNAc-pyrophosphoryl-undecaprenyl (GlcNAc-PP-C55). This Yersinia pestis protein is Undecaprenyl-phosphate alpha-N-acetylglucosaminyl 1-phosphate transferase.